We begin with the raw amino-acid sequence, 203 residues long: Small ribosomal subunit protein uS4 (203 aa).

The 64-residue stretch at 93–156 folds into the S4 RNA-binding domain; the sequence is RRLDNVVYRL…MKVPAILEAV (64 aa).

Belongs to the universal ribosomal protein uS4 family. As to quaternary structure, part of the 30S ribosomal subunit. Contacts protein S5. The interaction surface between S4 and S5 is involved in control of translational fidelity.

Functionally, one of the primary rRNA binding proteins, it binds directly to 16S rRNA where it nucleates assembly of the body of the 30S subunit. In terms of biological role, with S5 and S12 plays an important role in translational accuracy. This Streptococcus pyogenes serotype M49 (strain NZ131) protein is Small ribosomal subunit protein uS4.